The sequence spans 981 residues: Helicase-like transcription factor CHR28 (981 aa).

2 disordered regions span residues 1 to 66 (MDSA…LDSR) and 112 to 194 (KRTH…RNSE). The segment covering 46–65 (SGSSSGANGHTKTGLTNLDS) has biased composition (polar residues). Pro residues predominate over residues 119–128 (FSRPPFPPRP). Over residues 166–176 (HGTSASPSHFN) the composition is skewed to polar residues. Residues 181–194 (PMHRNGIGEERNSE) show a composition bias toward basic and acidic residues. A Helicase ATP-binding domain is found at 241–526 (ETNSLHCMGG…YSYFRFLKYD (286 aa)). 254 to 261 (DDQGLGKT) lines the ATP pocket. 2 disordered regions span residues 293–337 (DADD…RKFN) and 439–462 (VVGT…SDPD). Over residues 439–451 (VVGTTKKSKKKKG) the composition is skewed to basic residues. The RING-type; degenerate zinc-finger motif lies at 679-718 (CCVCHDPPEDPVVTLCGHIFCYQCVSDYITGDEDTCPAPR). Polar residues predominate over residues 779 to 798 (NQGTSNSTQNGQMASSSQQP). Positions 779 to 808 (NQGTSNSTQNGQMASSSQQPNDDDDDDDDD) are disordered. The segment covering 799 to 808 (NDDDDDDDDD) has biased composition (acidic residues). The Helicase C-terminal domain occupies 804–976 (DDDDDVTIVE…ATRLTVDDLK (173 aa)).

The protein belongs to the SNF2/RAD54 helicase family. RAD16 subfamily. Interacts with SUVR2.

It localises to the nucleus. In terms of biological role, probable helicase-like transcription factor involved in transcriptional gene silencing. Associates with SUVR2 and contributes to transcriptional gene silencing at RNA-directed DNA methylation (RdDM) target loci but also at RdDM-independent target loci. May be involved in nucleosome positioning to form ordered nucleosome arrays on chromatin. Associates with SUVR2 and functions redundantly with FRG1. Required for the efficient methylation of a broad range of RdDM target loci. This is Helicase-like transcription factor CHR28 from Arabidopsis thaliana (Mouse-ear cress).